The primary structure comprises 474 residues: Cyclin-dependent kinase 18 (474 aa).

Phosphoserine is present on residues Ser14, Ser74, Ser89, Ser98, Ser117, and Ser132. Residues 44–93 (NLQLGPLGRDPPQECSTFSPTDSGEEPGQLSPGVQFQRRQNQRRFSMEDV) are disordered. The Protein kinase domain occupies 144-425 (YVKLDKLGEG…AEAALSHSYF (282 aa)). ATP contacts are provided by residues 150 to 158 (LGEGTYATV) and Lys173. The Proton acceptor role is filled by Asp265. 2 positions are modified to phosphoserine: Ser440 and Ser443.

This sequence belongs to the protein kinase superfamily. CMGC Ser/Thr protein kinase family. CDC2/CDKX subfamily. As to expression, isoform 2 expression is limited to several subcortical nuclei of the basal gangli and the spinal cord. Isoform 1 is widely expressed.

The catalysed reaction is L-seryl-[protein] + ATP = O-phospho-L-seryl-[protein] + ADP + H(+). The enzyme catalyses L-threonyl-[protein] + ATP = O-phospho-L-threonyl-[protein] + ADP + H(+). May play a role in signal transduction cascades in terminally differentiated cells. In Homo sapiens (Human), this protein is Cyclin-dependent kinase 18 (CDK18).